We begin with the raw amino-acid sequence, 289 residues long: Aquaporin PIP1-2 (289 aa).

The interval 1–36 (MEGKEEDVRLGANKFSERQPIGTAAQGAADDKDYKE) is disordered. The next 2 helical transmembrane spans lie at 58–78 (IAEFVATFLFLYITILTVMGV) and 93–115 (IAWSFGGMIFALVYCTAGISGGH). An NPA 1 motif is present at residues 117–119 (NPA). The next 3 helical transmembrane spans lie at 136–156 (LFYIIMQCLGAVCGAGVVKGF), 178–198 (GDGLGAEIVGTFILVYTVFSA), and 212–232 (ILAPLPIGFAVFLVHLATIPI). The NPA 2 motif lies at 238-240 (NPA). Residues 260–280 (IFWVGPFIGAALAAIYHQVII) form a helical membrane-spanning segment.

It belongs to the MIP/aquaporin (TC 1.A.8) family. PIP (TC 1.A.8.11) subfamily. Interacts with PIP2-1 to form heteromers. In terms of tissue distribution, highly expressed in developing tassels and at lower levels in roots, shoots, ears and embryos. Expressed in the root growing zone at 5-6 mm from the root tip. Expressed in xylem parenchyma.

The protein localises to the cell membrane. Functionally, water channel required to facilitate the transport of water across cell membrane. Active as heteromers with PIP1-1, PIP2-1, PIP2-4 or PIP2-5, but not as homomers. The chain is Aquaporin PIP1-2 (PIP1-2) from Zea mays (Maize).